The primary structure comprises 203 residues: Small ribosomal subunit protein uS4 (203 aa).

One can recognise an S4 RNA-binding domain in the interval 93-173 (RRLDNVVFRS…FPSWIQVDKA (81 aa)).

It belongs to the universal ribosomal protein uS4 family. As to quaternary structure, part of the 30S ribosomal subunit. Contacts protein S5. The interaction surface between S4 and S5 is involved in control of translational fidelity.

Its function is as follows. One of the primary rRNA binding proteins, it binds directly to 16S rRNA where it nucleates assembly of the body of the 30S subunit. Functionally, with S5 and S12 plays an important role in translational accuracy. The protein is Small ribosomal subunit protein uS4 of Chlorobium limicola (strain DSM 245 / NBRC 103803 / 6330).